We begin with the raw amino-acid sequence, 442 residues long: UDP-N-acetylmuramoylalanine--D-glutamate ligase (442 aa).

Residue 113 to 119 (GSNGKTT) coordinates ATP.

It belongs to the MurCDEF family.

The protein resides in the cytoplasm. It carries out the reaction UDP-N-acetyl-alpha-D-muramoyl-L-alanine + D-glutamate + ATP = UDP-N-acetyl-alpha-D-muramoyl-L-alanyl-D-glutamate + ADP + phosphate + H(+). The protein operates within cell wall biogenesis; peptidoglycan biosynthesis. In terms of biological role, cell wall formation. Catalyzes the addition of glutamate to the nucleotide precursor UDP-N-acetylmuramoyl-L-alanine (UMA). The sequence is that of UDP-N-acetylmuramoylalanine--D-glutamate ligase from Coxiella burnetii (strain CbuK_Q154) (Coxiella burnetii (strain Q154)).